The chain runs to 319 residues: Beta-ketoacyl-[acyl-carrier-protein] synthase III (319 aa).

Active-site residues include C110 and H246. An ACP-binding region spans residues 247–251; sequence QANYR. N276 is a catalytic residue.

It belongs to the thiolase-like superfamily. FabH family. As to quaternary structure, homodimer.

It localises to the cytoplasm. The enzyme catalyses malonyl-[ACP] + acetyl-CoA + H(+) = 3-oxobutanoyl-[ACP] + CO2 + CoA. It participates in lipid metabolism; fatty acid biosynthesis. In terms of biological role, catalyzes the condensation reaction of fatty acid synthesis by the addition to an acyl acceptor of two carbons from malonyl-ACP. Catalyzes the first condensation reaction which initiates fatty acid synthesis and may therefore play a role in governing the total rate of fatty acid production. Possesses both acetoacetyl-ACP synthase and acetyl transacylase activities. Its substrate specificity determines the biosynthesis of branched-chain and/or straight-chain of fatty acids. This Lactobacillus delbrueckii subsp. bulgaricus (strain ATCC BAA-365 / Lb-18) protein is Beta-ketoacyl-[acyl-carrier-protein] synthase III.